A 305-amino-acid polypeptide reads, in one-letter code: UDP-3-O-acyl-N-acetylglucosamine deacetylase (305 aa).

Residues His79, His238, and Asp242 each contribute to the Zn(2+) site. The active-site Proton donor is the His265.

The protein belongs to the LpxC family. It depends on Zn(2+) as a cofactor.

The catalysed reaction is a UDP-3-O-[(3R)-3-hydroxyacyl]-N-acetyl-alpha-D-glucosamine + H2O = a UDP-3-O-[(3R)-3-hydroxyacyl]-alpha-D-glucosamine + acetate. It functions in the pathway glycolipid biosynthesis; lipid IV(A) biosynthesis; lipid IV(A) from (3R)-3-hydroxytetradecanoyl-[acyl-carrier-protein] and UDP-N-acetyl-alpha-D-glucosamine: step 2/6. Functionally, catalyzes the hydrolysis of UDP-3-O-myristoyl-N-acetylglucosamine to form UDP-3-O-myristoylglucosamine and acetate, the committed step in lipid A biosynthesis. This chain is UDP-3-O-acyl-N-acetylglucosamine deacetylase, found in Colwellia psychrerythraea (strain 34H / ATCC BAA-681) (Vibrio psychroerythus).